The sequence spans 325 residues: NADH-quinone oxidoreductase subunit H (325 aa).

9 helical membrane-spanning segments follow: residues 11–31 (ILLS…CGAF), 50–69 (NRVG…KMFF), 81–101 (VIFT…FAIV), 114–134 (IGIL…LFAG), 154–174 (LSYE…AGSF), 186–206 (IWNV…GVAV), 237–257 (FFVG…TLFF), 265–285 (LPPF…FILI), and 304–324 (VCLP…LWQA).

This sequence belongs to the complex I subunit 1 family. NDH-1 is composed of 13 different subunits. Subunits NuoA, H, J, K, L, M, N constitute the membrane sector of the complex.

Its subcellular location is the cell inner membrane. It carries out the reaction a quinone + NADH + 5 H(+)(in) = a quinol + NAD(+) + 4 H(+)(out). Its function is as follows. NDH-1 shuttles electrons from NADH, via FMN and iron-sulfur (Fe-S) centers, to quinones in the respiratory chain. The immediate electron acceptor for the enzyme in this species is believed to be ubiquinone. Couples the redox reaction to proton translocation (for every two electrons transferred, four hydrogen ions are translocated across the cytoplasmic membrane), and thus conserves the redox energy in a proton gradient. This subunit may bind ubiquinone. This is NADH-quinone oxidoreductase subunit H from Citrobacter koseri (strain ATCC BAA-895 / CDC 4225-83 / SGSC4696).